Here is a 576-residue protein sequence, read N- to C-terminus: RING finger and SPRY domain-containing protein 1 (576 aa).

Residues Met1 to Gly16 form the signal peptide. Ser50 carries the phosphoserine modification. The tract at residues Ser50 to Asn99 is disordered. A compositionally biased stretch (polar residues) spans Asp57–Val68. Positions Pro83–Lys97 are enriched in basic residues. The B30.2/SPRY domain maps to Leu300–Phe483. An N-linked (GlcNAc...) asparagine glycan is attached at Asn314. An RING-type zinc finger spans residues Cys527–Arg562.

The protein localises to the secreted. The sequence is that of RING finger and SPRY domain-containing protein 1 (RSPRY1) from Homo sapiens (Human).